The primary structure comprises 261 residues: Small ribosomal subunit protein uS2 (261 aa).

This sequence belongs to the universal ribosomal protein uS2 family.

This chain is Small ribosomal subunit protein uS2, found in Rhodospirillum centenum (strain ATCC 51521 / SW).